The chain runs to 421 residues: Probable sugar-binding periplasmic protein (421 aa).

The first 27 residues, 1–27 (MHKLLKLAAMGTAACALLAGMAPVANA), serve as a signal peptide directing secretion.

Belongs to the bacterial solute-binding protein 1 family.

The protein resides in the periplasm. Its function is as follows. Part of a binding-protein-dependent transport system for a sugar. The protein is Probable sugar-binding periplasmic protein of Brucella melitensis biotype 1 (strain ATCC 23456 / CCUG 17765 / NCTC 10094 / 16M).